Here is a 1324-residue protein sequence, read N- to C-terminus: DNA-directed RNA polymerase subunit beta' (1324 aa).

Zn(2+) contacts are provided by Cys219, Cys292, Cys299, and Cys302. The segment at Ala1293–Phe1324 is disordered. The span at Asp1302 to Phe1324 shows a compositional bias: acidic residues.

The protein belongs to the RNA polymerase beta' chain family. RpoC2 subfamily. In terms of assembly, in cyanobacteria the RNAP catalytic core is composed of 2 alpha, 1 beta, 1 beta', 1 gamma and 1 omega subunit. When a sigma factor is associated with the core the holoenzyme is formed, which can initiate transcription. Zn(2+) is required as a cofactor.

It catalyses the reaction RNA(n) + a ribonucleoside 5'-triphosphate = RNA(n+1) + diphosphate. In terms of biological role, DNA-dependent RNA polymerase catalyzes the transcription of DNA into RNA using the four ribonucleoside triphosphates as substrates. The polypeptide is DNA-directed RNA polymerase subunit beta' (Thermosynechococcus vestitus (strain NIES-2133 / IAM M-273 / BP-1)).